Consider the following 320-residue polypeptide: Ubiquinone biosynthesis protein COQ4, mitochondrial (320 aa).

A mitochondrion-targeting transit peptide spans 1–31; it reads MFARSALGRSDQLVTALNSQKRQFVLTAATT. Residues His205, Asp206, His209, and Glu221 each contribute to the Zn(2+) site.

The protein belongs to the COQ4 family. In terms of assembly, component of a multi-subunit COQ enzyme complex, composed of at least COQ3, COQ4, COQ5, COQ6, COQ7 and COQ9. Requires Zn(2+) as cofactor.

It localises to the mitochondrion inner membrane. It carries out the reaction a 4-hydroxy-3-methoxy-5-(all-trans-polyprenyl)benzoate + H(+) = a 2-methoxy-6-(all-trans-polyprenyl)phenol + CO2. The protein operates within cofactor biosynthesis; ubiquinone biosynthesis. Its function is as follows. Lyase that catalyzes the C1-decarboxylation of 4-hydroxy-3-methoxy-5-(all-trans-polyprenyl)benzoic acid into 2-methoxy-6-(all-trans-polyprenyl)phenol during ubiquinone biosynthesis. The protein is Ubiquinone biosynthesis protein COQ4, mitochondrial of Scheffersomyces stipitis (strain ATCC 58785 / CBS 6054 / NBRC 10063 / NRRL Y-11545) (Yeast).